A 102-amino-acid polypeptide reads, in one-letter code: MTIGLEHYLAVAAILFVTGIFGIFVNRKNVIVILMSIELMLLAVNINMVAFSTHLGDLVGQVFTMFVLTVAAAEAAIGLAILVVFFRNRGTIAVEDVNVMKG.

Helical transmembrane passes span 5–25 (LEHYLAVAAILFVTGIFGIFV), 31–51 (IVILMSIELMLLAVNINMVAF), and 66–86 (FVLTVAAAEAAIGLAILVVFF).

This sequence belongs to the complex I subunit 4L family. In terms of assembly, NDH-1 is composed of 14 different subunits. Subunits NuoA, H, J, K, L, M, N constitute the membrane sector of the complex.

Its subcellular location is the cellular chromatophore membrane. It catalyses the reaction a quinone + NADH + 5 H(+)(in) = a quinol + NAD(+) + 4 H(+)(out). Functionally, NDH-1 shuttles electrons from NADH, via FMN and iron-sulfur (Fe-S) centers, to quinones in the respiratory chain. The immediate electron acceptor for the enzyme in this species is believed to be ubiquinone. Couples the redox reaction to proton translocation (for every two electrons transferred, four hydrogen ions are translocated across the cytoplasmic membrane), and thus conserves the redox energy in a proton gradient. The chain is NADH-quinone oxidoreductase subunit K from Rhodobacter capsulatus (Rhodopseudomonas capsulata).